Reading from the N-terminus, the 274-residue chain is WIMGHMVNGLEQVSEFLNLGANAIEFDIDFDQNGVAKITHHGIPCDCGRLCTKQTVFTEYLDNIRHVTTPGDPKFREQLILLALDLKLQRIPVEKAYAAGVDVATKLLDHYWQRGKSKARAYILLNLPLVQDYEFIRAFKDTLKNEGYEQHNDKVGVNFTGNEDLDETRKVLKKVGVDKHVWQADGITSCFARGTDRLTEALKRRDTPGYNYAYKVYAWTLVKYSTMRRLFRLGVDGVMSNFPDRVVEVLKEEEFADKFRMATYDDNPWKKFTG.

Histidine 5 is an active-site residue. Residues glutamate 25 and aspartate 27 each coordinate Mg(2+). The active-site Nucleophile is the histidine 41. Disulfide bonds link cysteine 45–cysteine 51 and cysteine 47–cysteine 190. Aspartate 85 contacts Mg(2+).

Belongs to the arthropod phospholipase D family. Class II subfamily. Mg(2+) is required as a cofactor. Expressed by the venom gland.

The protein localises to the secreted. It carries out the reaction an N-(acyl)-sphingosylphosphocholine = an N-(acyl)-sphingosyl-1,3-cyclic phosphate + choline. The catalysed reaction is an N-(acyl)-sphingosylphosphoethanolamine = an N-(acyl)-sphingosyl-1,3-cyclic phosphate + ethanolamine. It catalyses the reaction a 1-acyl-sn-glycero-3-phosphocholine = a 1-acyl-sn-glycero-2,3-cyclic phosphate + choline. The enzyme catalyses a 1-acyl-sn-glycero-3-phosphoethanolamine = a 1-acyl-sn-glycero-2,3-cyclic phosphate + ethanolamine. In terms of biological role, dermonecrotic toxins cleave the phosphodiester linkage between the phosphate and headgroup of certain phospholipids (sphingolipid and lysolipid substrates), forming an alcohol (often choline) and a cyclic phosphate. This toxin acts on sphingomyelin (SM). It may also act on ceramide phosphoethanolamine (CPE), lysophosphatidylcholine (LPC) and lysophosphatidylethanolamine (LPE), but not on lysophosphatidylserine (LPS), and lysophosphatidylglycerol (LPG). It acts by transphosphatidylation, releasing exclusively cyclic phosphate products as second products. Induces dermonecrosis, hemolysis, increased vascular permeability, edema, inflammatory response, and platelet aggregation. This chain is Dermonecrotic toxin SdSicTox-betaIIB2ii, found in Sicarius cf. damarensis (strain GJB-2008) (Six-eyed sand spider).